We begin with the raw amino-acid sequence, 747 residues long: Kinesin-like protein KIF3B (747 aa).

At methionine 1 the chain carries N-acetylmethionine. Serine 2 is modified (N-acetylserine; in Kinesin-like protein KIF3B, N-terminally processed). The Kinesin motor domain occupies 9–340; that stretch reads SVRVVVRCRP…LRYANRAKNI (332 aa). 96-103 is an ATP binding site; the sequence is GQTGTGKT. Residues 346–579 are a coiled coil; that stretch reads VNEDPKDALL…EQTQNELTRE (234 aa). Disordered stretches follow at residues 374–412 and 698–747; these read IGRR…DKDD and IQVD…LVPK. Over residues 393-411 the composition is skewed to acidic residues; sequence GEEEEEEGEEGEEDGDDKD. Positions 580-747 are globular; sequence LKLKHLIIEN…YPQSRGLVPK (168 aa). Positions 701-710 are enriched in polar residues; sequence DASSFESTAS. The span at 711–721 shows a compositional bias: basic residues; it reads RKPKARPKSGR. Over residues 722-735 the composition is skewed to low complexity; that stretch reads KSGSSSSSSGNPAS.

This sequence belongs to the TRAFAC class myosin-kinesin ATPase superfamily. Kinesin family. Kinesin II subfamily. As to quaternary structure, heterodimer of KIF3A and KIF3B. KIF3A/KIF3B heterodimer interacts with KIFAP3 forming a heterotrimeric (KIF3A/KIF3B/KIFAP3) complex. Interacts with the SMC3 subunit of the cohesin complex. Interacts directly with IFT20. Interacts with FLCN.

Its subcellular location is the cytoplasm. The protein localises to the cytoskeleton. It is found in the cell projection. The protein resides in the cilium. It localises to the dendritic spine. In terms of biological role, microtubule-based molecular motor that transport intracellular cargos, such as vesicles, organelles and protein complexes. Uses ATP hydrolysis to generate force to bind and move along the microtubule. Plays a role in cilia formation. Involved in photoreceptor integrity and opsin trafficking in rod photoreceptors. Transports vesicles containing N-methyl-D-aspartate (NMDA) receptor subunit GRIN2A into neuronal dendrites. In Mus musculus (Mouse), this protein is Kinesin-like protein KIF3B.